Reading from the N-terminus, the 88-residue chain is Large ribosomal subunit protein bL27 (88 aa).

This sequence belongs to the bacterial ribosomal protein bL27 family.

The polypeptide is Large ribosomal subunit protein bL27 (Mycolicibacterium smegmatis (strain ATCC 700084 / mc(2)155) (Mycobacterium smegmatis)).